The chain runs to 928 residues: Serine/threonine-protein kinase atg1 (928 aa).

The region spanning Y6 to I315 is the Protein kinase domain. ATP is bound by residues I12–V20 and K35. Catalysis depends on D149, which acts as the Proton acceptor. 2 disordered regions span residues P318–R470 and F544–A571. Positions T359–Y371 are enriched in basic and acidic residues. Residues T437–E452 show a composition bias toward polar residues. 2 stretches are compositionally biased toward basic and acidic residues: residues Q459–R470 and S548–Y564.

Belongs to the protein kinase superfamily. Ser/Thr protein kinase family. APG1/unc-51/ULK1 subfamily. As to quaternary structure, homodimer. Forms a ternary complex with ATG13 and ATG17.

The protein localises to the cytoplasm. Its subcellular location is the preautophagosomal structure membrane. It catalyses the reaction L-seryl-[protein] + ATP = O-phospho-L-seryl-[protein] + ADP + H(+). The catalysed reaction is L-threonyl-[protein] + ATP = O-phospho-L-threonyl-[protein] + ADP + H(+). In terms of biological role, serine/threonine protein kinase involved in the cytoplasm to vacuole transport (Cvt) and found to be essential in autophagy, where it is required for the formation of autophagosomes. Involved in the clearance of protein aggregates which cannot be efficiently cleared by the proteasome. Required for selective autophagic degradation of the nucleus (nucleophagy) as well as for mitophagy which contributes to regulate mitochondrial quantity and quality by eliminating the mitochondria to a basal level to fulfill cellular energy requirements and preventing excess ROS production. Also involved in endoplasmic reticulum-specific autophagic process, in selective removal of ER-associated degradation (ERAD) substrates. Plays a key role in ATG9 and ATG23 cycling through the pre-autophagosomal structure and is necessary to promote ATG18 binding to ATG9 through phosphorylation of ATG9. Catalyzes phosphorylation of ATG4, decreasing the interaction between ATG4 and ATG8 and impairing deconjugation of PE-conjugated forms of ATG8. The sequence is that of Serine/threonine-protein kinase atg1 from Aspergillus clavatus (strain ATCC 1007 / CBS 513.65 / DSM 816 / NCTC 3887 / NRRL 1 / QM 1276 / 107).